The chain runs to 426 residues: tRNA(Ile)-lysidine synthase (426 aa).

Residue 19–24 (SGGLDS) participates in ATP binding.

It belongs to the tRNA(Ile)-lysidine synthase family.

Its subcellular location is the cytoplasm. The catalysed reaction is cytidine(34) in tRNA(Ile2) + L-lysine + ATP = lysidine(34) in tRNA(Ile2) + AMP + diphosphate + H(+). Ligates lysine onto the cytidine present at position 34 of the AUA codon-specific tRNA(Ile) that contains the anticodon CAU, in an ATP-dependent manner. Cytidine is converted to lysidine, thus changing the amino acid specificity of the tRNA from methionine to isoleucine. The polypeptide is tRNA(Ile)-lysidine synthase (Neisseria meningitidis serogroup A / serotype 4A (strain DSM 15465 / Z2491)).